Reading from the N-terminus, the 877-residue chain is Alanine--tRNA ligase (877 aa).

Zn(2+)-binding residues include His567, His571, Cys669, and His673.

It belongs to the class-II aminoacyl-tRNA synthetase family. Zn(2+) serves as cofactor.

It is found in the cytoplasm. The enzyme catalyses tRNA(Ala) + L-alanine + ATP = L-alanyl-tRNA(Ala) + AMP + diphosphate. Its function is as follows. Catalyzes the attachment of alanine to tRNA(Ala) in a two-step reaction: alanine is first activated by ATP to form Ala-AMP and then transferred to the acceptor end of tRNA(Ala). Also edits incorrectly charged Ser-tRNA(Ala) and Gly-tRNA(Ala) via its editing domain. The protein is Alanine--tRNA ligase of Rickettsia prowazekii (strain Madrid E).